The sequence spans 1065 residues: DNA ligase 4 (1065 aa).

Residues 1 to 20 (MAVHAPYNHAPPPTQEINGQ) form a disordered region. E295, K297, L298, R302, E357, F387, E452, K457, K474, and K476 together coordinate ATP. The active-site N6-AMP-lysine intermediate is K297. E357 contacts Mg(2+). Position 452 (E452) interacts with Mg(2+). In terms of domain architecture, BRCT 1 spans 696 to 775 (VETSIFSDMT…TALPFLKEFL (80 aa)). The disordered stretch occupies residues 825 to 928 (GEDKDEIDVE…SDVGVNGDDY (104 aa)). Composition is skewed to basic and acidic residues over residues 834 to 864 (EESR…KKLQ) and 886 to 900 (MSLK…ERSR). Residues 954–1064 (DEDRIFYHLA…TLLDEDLYKP (111 aa)) form the BRCT 2 domain.

It belongs to the ATP-dependent DNA ligase family. Requires Mg(2+) as cofactor.

Its subcellular location is the nucleus. The enzyme catalyses ATP + (deoxyribonucleotide)n-3'-hydroxyl + 5'-phospho-(deoxyribonucleotide)m = (deoxyribonucleotide)n+m + AMP + diphosphate.. Functionally, DNA ligase involved in DNA non-homologous end joining (NHEJ); required for double-strand break (DSB) repair. In Cryptococcus neoformans var. neoformans serotype D (strain B-3501A) (Filobasidiella neoformans), this protein is DNA ligase 4 (LIG4).